The sequence spans 166 residues: MIYVDNRQEKMEVSDEFTNHLEKVIEFALKEEDVNIPSEISLLFVDNEEIREINNETRNIDRATDVLSFPMLDYPEKKVFKEVYTENDFSEADFDGDDLVLGDIVLSLERALEQSKEYNHSYEREASYLVVHSVLHLLGYDHMEEDDKVKMRKREEEILTALDIRR.

Zn(2+)-binding residues include H132, H136, and H142.

Belongs to the endoribonuclease YbeY family. Zn(2+) serves as cofactor.

It localises to the cytoplasm. In terms of biological role, single strand-specific metallo-endoribonuclease involved in late-stage 70S ribosome quality control and in maturation of the 3' terminus of the 16S rRNA. This chain is Endoribonuclease YbeY, found in Clostridium botulinum (strain Alaska E43 / Type E3).